The sequence spans 145 residues: D-aminoacyl-tRNA deacylase (145 aa).

Residues 137–138 (GP) carry the Gly-cisPro motif, important for rejection of L-amino acids motif.

Belongs to the DTD family. Homodimer.

The protein localises to the cytoplasm. The enzyme catalyses glycyl-tRNA(Ala) + H2O = tRNA(Ala) + glycine + H(+). The catalysed reaction is a D-aminoacyl-tRNA + H2O = a tRNA + a D-alpha-amino acid + H(+). In terms of biological role, an aminoacyl-tRNA editing enzyme that deacylates mischarged D-aminoacyl-tRNAs. Also deacylates mischarged glycyl-tRNA(Ala), protecting cells against glycine mischarging by AlaRS. Acts via tRNA-based rather than protein-based catalysis; rejects L-amino acids rather than detecting D-amino acids in the active site. By recycling D-aminoacyl-tRNA to D-amino acids and free tRNA molecules, this enzyme counteracts the toxicity associated with the formation of D-aminoacyl-tRNA entities in vivo and helps enforce protein L-homochirality. This Pseudomonas putida (strain W619) protein is D-aminoacyl-tRNA deacylase.